Here is a 425-residue protein sequence, read N- to C-terminus: Serine--tRNA ligase (425 aa).

233-235 (TAE) contacts L-serine. 264 to 266 (RRE) contacts ATP. L-serine is bound at residue E287. ATP is bound at residue 351–354 (EISS). S385 is a binding site for L-serine.

Belongs to the class-II aminoacyl-tRNA synthetase family. Type-1 seryl-tRNA synthetase subfamily. In terms of assembly, homodimer. The tRNA molecule binds across the dimer.

It localises to the cytoplasm. The catalysed reaction is tRNA(Ser) + L-serine + ATP = L-seryl-tRNA(Ser) + AMP + diphosphate + H(+). The enzyme catalyses tRNA(Sec) + L-serine + ATP = L-seryl-tRNA(Sec) + AMP + diphosphate + H(+). Its pathway is aminoacyl-tRNA biosynthesis; selenocysteinyl-tRNA(Sec) biosynthesis; L-seryl-tRNA(Sec) from L-serine and tRNA(Sec): step 1/1. In terms of biological role, catalyzes the attachment of serine to tRNA(Ser). Is also able to aminoacylate tRNA(Sec) with serine, to form the misacylated tRNA L-seryl-tRNA(Sec), which will be further converted into selenocysteinyl-tRNA(Sec). The chain is Serine--tRNA ligase from Synechococcus sp. (strain WH7803).